The primary structure comprises 200 residues: Probable DNA-directed RNA polymerase subunit delta (200 aa).

An HTH HARE-type domain is found at 19–88; it reads LSMIEVARAI…GDNKWGLRSW (70 aa). 2 stretches are compositionally biased toward acidic residues: residues 125–143 and 150–200; these read DSDAIDYNADDPEDEDAYE and YDDE…TSEE. The tract at residues 125-200 is disordered; it reads DSDAIDYNAD…SDDDAETSEE (76 aa).

It belongs to the RpoE family. In terms of assembly, RNAP is composed of a core of 2 alpha, a beta and a beta' subunits. The core is associated with a delta subunit and one of several sigma factors.

Participates in both the initiation and recycling phases of transcription. In the presence of the delta subunit, RNAP displays an increased specificity of transcription, a decreased affinity for nucleic acids, and an increased efficiency of RNA synthesis because of enhanced recycling. The polypeptide is Probable DNA-directed RNA polymerase subunit delta (Streptococcus pneumoniae serotype 4 (strain ATCC BAA-334 / TIGR4)).